We begin with the raw amino-acid sequence, 213 residues long: Thiopurine S-methyltransferase (213 aa).

Residues tryptophan 10, leucine 45, glutamate 66, and arginine 121 each contribute to the S-adenosyl-L-methionine site.

The protein belongs to the class I-like SAM-binding methyltransferase superfamily. TPMT family.

It localises to the cytoplasm. The enzyme catalyses S-adenosyl-L-methionine + a thiopurine = S-adenosyl-L-homocysteine + a thiopurine S-methylether.. The protein is Thiopurine S-methyltransferase of Aliivibrio salmonicida (strain LFI1238) (Vibrio salmonicida (strain LFI1238)).